A 398-amino-acid polypeptide reads, in one-letter code: Proteasome-activating nucleotidase (398 aa).

The stretch at aspartate 3–serine 60 forms a coiled coil. ATP contacts are provided by residues glycine 185–leucine 190 and histidine 324. The docks into pockets in the proteasome alpha-ring to cause gate opening stretch occupies residues methionine 396–valine 398.

It belongs to the AAA ATPase family. In terms of assembly, homohexamer. The hexameric complex has a two-ring architecture resembling a top hat that caps the 20S proteasome core at one or both ends. Upon ATP-binding, the C-terminus of PAN interacts with the alpha-rings of the proteasome core by binding to the intersubunit pockets.

It localises to the cytoplasm. ATPase which is responsible for recognizing, binding, unfolding and translocation of substrate proteins into the archaeal 20S proteasome core particle. Is essential for opening the gate of the 20S proteasome via an interaction with its C-terminus, thereby allowing substrate entry and access to the site of proteolysis. Thus, the C-termini of the proteasomal ATPase function like a 'key in a lock' to induce gate opening and therefore regulate proteolysis. Unfolding activity requires energy from ATP hydrolysis, whereas ATP binding alone promotes ATPase-20S proteasome association which triggers gate opening, and supports translocation of unfolded substrates. The polypeptide is Proteasome-activating nucleotidase (Archaeoglobus fulgidus (strain ATCC 49558 / DSM 4304 / JCM 9628 / NBRC 100126 / VC-16)).